The chain runs to 569 residues: Apical membrane antigen 1 (569 aa).

Positions 1-48 (MICSIMGGLRSLRAARPYSHQSNTETKHMGLVGVASLLVLVADCTIFA) are cleaved as a signal peptide. Residues 49 to 66 (SGLSSSTRSRESQTLSAS) constitute a propeptide, removed in mature form; required for microneme targeting of the proprotein. Over 49–483 (SGLSSSTRSR…DEQNECGSNT (435 aa)) the chain is Extracellular. The interval 67–287 (TSGNPFQANV…NPDAFISKCP (221 aa)) is DI. Asparagine 86 carries an N-linked (GlcNAc...) asparagine glycan. 8 cysteine pairs are disulfide-bonded: cysteine 117–cysteine 286, cysteine 194–cysteine 226, cysteine 242–cysteine 255, cysteine 304–cysteine 393, cysteine 324–cysteine 384, cysteine 435–cysteine 459, cysteine 447–cysteine 471, and cysteine 452–cysteine 479. The interval 288-415 (NQALRGYRFG…AGSLSEETPN (128 aa)) is DII. The DIII stretch occupies residues 416–487 (FIIPSNPSVT…ECGSNTALIA (72 aa)). A helical transmembrane segment spans residues 484–504 (ALIAGLAVGGVLLLALLGGGC). Over 505–569 (YFAKRLDRNK…ETHVMVEGDY (65 aa)) the chain is Cytoplasmic. The span at 518-530 (AAHHEHEFQSDRG) shows a compositional bias: basic and acidic residues. The tract at residues 518-548 (AAHHEHEFQSDRGARKKRPSDLMQEAEPSFW) is disordered.

The protein belongs to the apicomplexan parasites AMA1 family. Component of the moving junction (MJ) complex, composed of AMA1, a transmembrane protein on the parasite surface, and a complex of the rhoptry neck proteins RON2, RON4, RON5 and RON8 localized to the cytoplasmic face of the host plasma membrane. Interacts (via ectodomain) with RON2 (via C-terminus); RON2 serves as the receptor for AMA1 on the host plasma membrane. AMA1 and the RON proteins are initially in distinct compartments within the parasite, namely the micronemes and the rhoptries, and interaction happens only upon initiation of invasion when the micronemes and rhoptries discharge. In terms of processing, proteolytically cleaved during invasion within its transmembrane domain, releasing a soluble form from the tachyzoite surface. The cytosolic tail generated by ROM4 cleavage during invasion may trigger parasite replication within the parasitophorous vacuole.

It is found in the cell membrane. Its subcellular location is the secreted. In terms of biological role, essential microneme protein that plays an important role in host cell invasion. Part of the moving junction (MJ) complex, a ringlike structure formed between the plasma membranes of the apical tip of the parasite and the target host cell. During invasion, the MJ migrates from the anterior to the posterior of the parasite, leading to internalization of the parasite into a parasitophorous vacuole (PV). In Toxoplasma gondii (strain ATCC 50861 / VEG), this protein is Apical membrane antigen 1 (AMA1).